The primary structure comprises 293 residues: Formamidopyrimidine-DNA glycosylase (293 aa).

Proline 2 functions as the Schiff-base intermediate with DNA in the catalytic mechanism. The active-site Proton donor is the glutamate 3. Lysine 60 (proton donor; for beta-elimination activity) is an active-site residue. Residues histidine 110, arginine 129, and arginine 174 each coordinate DNA. The FPG-type zinc-finger motif lies at 259-293; the sequence is NVYRRTGKECRKCGNLIERKKISGRSTHWCPKCQK. Arginine 283 (proton donor; for delta-elimination activity) is an active-site residue.

It belongs to the FPG family. Monomer. Requires Zn(2+) as cofactor.

The enzyme catalyses Hydrolysis of DNA containing ring-opened 7-methylguanine residues, releasing 2,6-diamino-4-hydroxy-5-(N-methyl)formamidopyrimidine.. The catalysed reaction is 2'-deoxyribonucleotide-(2'-deoxyribose 5'-phosphate)-2'-deoxyribonucleotide-DNA = a 3'-end 2'-deoxyribonucleotide-(2,3-dehydro-2,3-deoxyribose 5'-phosphate)-DNA + a 5'-end 5'-phospho-2'-deoxyribonucleoside-DNA + H(+). Involved in base excision repair of DNA damaged by oxidation or by mutagenic agents. Acts as a DNA glycosylase that recognizes and removes damaged bases. Has a preference for oxidized purines, such as 7,8-dihydro-8-oxoguanine (8-oxoG). Has AP (apurinic/apyrimidinic) lyase activity and introduces nicks in the DNA strand. Cleaves the DNA backbone by beta-delta elimination to generate a single-strand break at the site of the removed base with both 3'- and 5'-phosphates. In Prochlorococcus marinus (strain MIT 9215), this protein is Formamidopyrimidine-DNA glycosylase.